We begin with the raw amino-acid sequence, 151 residues long: Calmodulin-like protein 9 (151 aa).

4 consecutive EF-hand domains span residues glutamate 8–asparagine 43, proline 44–glutamine 79, serine 81–lysine 116, and isoleucine 117–tyrosine 151. Ca(2+) is bound by residues aspartate 94, aspartate 96, aspartate 98, glutamate 105, aspartate 130, aspartate 132, aspartate 134, and glutamate 141.

It belongs to the calmodulin family. In terms of assembly, interacts with IQD1. Interacts with ILK1. Binds to ABCG36. In terms of tissue distribution, expressed in leaves, flowers and siliques.

Potential calcium sensor. The protein is Calmodulin-like protein 9 of Arabidopsis thaliana (Mouse-ear cress).